The sequence spans 67 residues: Alpha-actitoxin-Ms11a-3 (67 aa).

The signal sequence occupies residues 1-24 (MASKIFFVLAVFLVMSAVLPESFA). 3 disulfide bridges follow: Cys26–Cys41, Cys33–Cys46, and Cys40–Cys61. At Lys66 the chain carries Lysine amide.

Its subcellular location is the secreted. The protein localises to the nematocyst. Functionally, alpha-toxins act on postsynaptic membranes, they bind to the nicotinic acetylcholine receptors (nAChR) and thus inhibit them. This toxin shows inhibition against mouse alpha-1-beta-1-delta-epsilon (CHRNA1-CHRNB1-CHRND-CHRNE) (IC(50)=1215 nM), rat alpha-3-beta-4/CHRNA3-CHRNB4 (IC(50)=5.173 uM), rat alpha-7/CHRNA7 (IC(50)=4.786 uM), human alpha-7/CHRNA7 (IC(50)=8.869 uM), and rat alpha-9-alpha-10/CHRNA9-CHRNA10 (IC(50)=202 nM). Also competes with alpha-bungarotoxin for binding to orthosteric sites on muscle-type T.carlifornicus (IC(50)=256 nM) and human alpha-7/CHRNA7 nAChRs (IC(50)=19.81 uM). The chain is Alpha-actitoxin-Ms11a-3 from Metridium senile (Brown sea anemone).